Consider the following 569-residue polypeptide: Sulfite reductase [NADPH] hemoprotein beta-component (569 aa).

Residues Cys-434, Cys-440, Cys-479, and Cys-483 each contribute to the [4Fe-4S] cluster site. Residue Cys-483 coordinates siroheme.

This sequence belongs to the nitrite and sulfite reductase 4Fe-4S domain family. In terms of assembly, alpha(8)-beta(8). The alpha component is a flavoprotein, the beta component is a hemoprotein. Siroheme is required as a cofactor. [4Fe-4S] cluster serves as cofactor.

It catalyses the reaction hydrogen sulfide + 3 NADP(+) + 3 H2O = sulfite + 3 NADPH + 4 H(+). The protein operates within sulfur metabolism; hydrogen sulfide biosynthesis; hydrogen sulfide from sulfite (NADPH route): step 1/1. Component of the sulfite reductase complex that catalyzes the 6-electron reduction of sulfite to sulfide. This is one of several activities required for the biosynthesis of L-cysteine from sulfate. This chain is Sulfite reductase [NADPH] hemoprotein beta-component, found in Staphylococcus saprophyticus subsp. saprophyticus (strain ATCC 15305 / DSM 20229 / NCIMB 8711 / NCTC 7292 / S-41).